We begin with the raw amino-acid sequence, 739 residues long: UPF0313 protein YgiQ (739 aa).

Positions 372-650 (AYEMIRFSVN…KALLRYHDPA (279 aa)) constitute a Radical SAM core domain. 3 residues coordinate [4Fe-4S] cluster: C386, C390, and C393. The tract at residues 685–739 (REARRQNRNTRPALTKHTPMATQRQTPATAKKASSTQSRPVNAGAKKRPKAAVGR) is disordered. The segment covering 704 to 724 (MATQRQTPATAKKASSTQSRP) has biased composition (polar residues). The segment covering 729–739 (AKKRPKAAVGR) has biased composition (basic residues).

Belongs to the UPF0313 family. It depends on [4Fe-4S] cluster as a cofactor.

This chain is UPF0313 protein YgiQ, found in Shigella flexneri.